The following is a 442-amino-acid chain: UDP-glycosyltransferase 79B8 (442 aa).

UDP-alpha-D-glucose is bound by residues S260, 319-321 (VQQ), 336-344 (HCGPGTIWE), and 358-361 (LGDQ).

The protein belongs to the UDP-glycosyltransferase family.

The sequence is that of UDP-glycosyltransferase 79B8 (UGT79B8) from Arabidopsis thaliana (Mouse-ear cress).